The following is a 492-amino-acid chain: N-succinylglutamate 5-semialdehyde dehydrogenase (492 aa).

An NAD(+)-binding site is contributed by 220–225; the sequence is GSASTG. Catalysis depends on residues E243 and C277.

The protein belongs to the aldehyde dehydrogenase family. AstD subfamily.

The catalysed reaction is N-succinyl-L-glutamate 5-semialdehyde + NAD(+) + H2O = N-succinyl-L-glutamate + NADH + 2 H(+). Its pathway is amino-acid degradation; L-arginine degradation via AST pathway; L-glutamate and succinate from L-arginine: step 4/5. In terms of biological role, catalyzes the NAD-dependent reduction of succinylglutamate semialdehyde into succinylglutamate. In Salmonella dublin (strain CT_02021853), this protein is N-succinylglutamate 5-semialdehyde dehydrogenase.